The sequence spans 1178 residues: Pyruvate carboxylase, mitochondrial (1178 aa).

A mitochondrion-targeting transit peptide spans 1-20 (MLKFQTVRGGLRLLGVRRSS). A Phosphoserine modification is found at Ser-21. An N6-acetyllysine mark is found at Lys-35 and Lys-39. Residues 36 to 486 (PIKKVMVANR…DTQFIDENPE (451 aa)) form the Biotin carboxylation domain. Lys-79 carries the N6-acetyllysine; alternate modification. Position 79 is an N6-succinyllysine; alternate (Lys-79). 2 positions are modified to N6-acetyllysine: Lys-148 and Lys-152. ATP is bound by residues Lys-152 and Glu-236. The region spanning 156-353 (RAIAIAAGVP…LVHAQIHVSE (198 aa)) is the ATP-grasp domain. Lys-241 carries the post-translational modification N6-acetyllysine. An ATP-binding site is contributed by His-271. Lys-297, Lys-316, and Lys-319 each carry N6-acetyllysine. Arg-328 is a catalytic residue. Position 434 is an N6-acetyllysine (Lys-434). Lys-442 carries the post-translational modification N6-succinyllysine. Positions 563 to 832 (LLLMDTTFRD…DTEVPLERVF (270 aa)) constitute a Pyruvate carboxyltransferase domain. 571-575 (RDAHQ) lines the substrate pocket. Asp-572 contacts Mn(2+). Lys-589 bears the N6-acetyllysine mark. Residue Arg-644 coordinates substrate. N6-acetyllysine occurs at positions 661 and 717. Residue Lys-741 coordinates Mn(2+). N6-carboxylysine is present on Lys-741. The residue at position 748 (Lys-748) is an N6-acetyllysine. Mn(2+) is bound by residues His-771 and His-773. Lys-892 carries the N6-acetyllysine modification. Thr-908 is a substrate binding site. Lys-969 carries the post-translational modification N6-acetyllysine. Lys-988 carries the N6-acetyllysine; alternate modification. Lys-988 bears the N6-succinyllysine; alternate mark. Lys-992 is modified (N6-acetyllysine). Thr-1003 is subject to Phosphothreonine. 3 positions are modified to N6-acetyllysine: Lys-1061, Lys-1090, and Lys-1124. Positions 1109–1178 (KGQIGAPMPG…EGDDLILEIE (70 aa)) constitute a Biotinyl-binding domain. At Lys-1144 the chain carries N6-biotinyllysine.

Homotetramer. Interacts (via the biotin carboxylation domain) with SIRT4. Biotin serves as cofactor. The cofactor is Mn(2+). Acetylation of Lys-316 is observed in liver mitochondria from fasted mice but not from fed mice. Acetylation of Lys-748 might play a role in catalytic activity regulation. As to expression, liver, kidney, adipose tissue, liver and brain.

It localises to the mitochondrion matrix. The enzyme catalyses hydrogencarbonate + pyruvate + ATP = oxaloacetate + ADP + phosphate + H(+). It participates in carbohydrate biosynthesis; gluconeogenesis. Its function is as follows. Pyruvate carboxylase catalyzes a 2-step reaction, involving the ATP-dependent carboxylation of the covalently attached biotin in the first step and the transfer of the carboxyl group to pyruvate in the second. Catalyzes in a tissue specific manner, the initial reactions of glucose (liver, kidney) and lipid (adipose tissue, liver, brain) synthesis from pyruvate. The protein is Pyruvate carboxylase, mitochondrial (Pc) of Mus musculus (Mouse).